Reading from the N-terminus, the 1409-residue chain is DNA-directed RNA polymerase subunit beta' (1409 aa).

The Zn(2+) site is built by Cys70, Cys72, Cys85, and Cys88. Residues Asp458, Asp460, and Asp462 each coordinate Mg(2+). Zn(2+)-binding residues include Cys813, Cys887, Cys894, and Cys897.

The protein belongs to the RNA polymerase beta' chain family. The RNAP catalytic core consists of 2 alpha, 1 beta, 1 beta' and 1 omega subunit. When a sigma factor is associated with the core the holoenzyme is formed, which can initiate transcription. The cofactor is Mg(2+). It depends on Zn(2+) as a cofactor.

It catalyses the reaction RNA(n) + a ribonucleoside 5'-triphosphate = RNA(n+1) + diphosphate. In terms of biological role, DNA-dependent RNA polymerase catalyzes the transcription of DNA into RNA using the four ribonucleoside triphosphates as substrates. This Delftia acidovorans (strain DSM 14801 / SPH-1) protein is DNA-directed RNA polymerase subunit beta'.